The chain runs to 497 residues: MTKHIIVIGGGLGGISAAIRMAQSGYSVSLYEQNNHIGGKVNRHESDGFGFDLGPSILTMPYIFEKLFEYSKKQMSDYVTIKRLPHQWRSFFPDGTTIDLYEGIKETGQHNAILSKQDIEELQNYLNYTRRIDRITEKGYFNYGLDTLSQIIKFHGPLNALINYDYVHTMQQAIDKRISNPYLRQMLGYFIKYVGSSSYDAPAVLSMLFHMQQEQGLWYVEGGIHHLANALEKLAREEGVTIHTGARVDNIKTYQRRVTGVRLDTGEFVKADYIISNMEVIPTYKYLIHLDTQRLNKLEREFEPASSGYVMHLGVACQYPQLAHHNFFFTENAYLNYQQVFHEKVLPDDPTIYLVNTNKTDHTQAPVGYENIKVLPHIPYIQDQPFTTEDYAKFRDKILDKLEKMGLTDLRKHIIYEDVWTPEDIEKNYRSNRGAIYGVVADKKKNKGFKFPKESQYFENLYFVGGSVNPGGGIPMVTLSGQQVADKINAREAKNRK.

An FAD-binding site is contributed by 7-19 (VIGGGLGGISAAI).

This sequence belongs to the carotenoid/retinoid oxidoreductase family. CrtP subfamily. It depends on FAD as a cofactor.

It carries out the reaction all-trans-4,4'-diaponeurosporene + 2 AH2 + 2 O2 = 4,4'-diaponeurosporenal + 2 A + 3 H2O. It participates in carotenoid biosynthesis; staphyloxanthin biosynthesis; staphyloxanthin from farnesyl diphosphate: step 3/5. In terms of biological role, involved in the biosynthesis of the yellow-orange carotenoid staphyloxanthin, which plays a role in the virulence via its protective function against oxidative stress. Catalyzes the oxidation of the terminal methyl side group of 4,4'-diaponeurosporene to form 4,4'-diaponeurosporen-4-al. In Staphylococcus aureus (strain MSSA476), this protein is 4,4'-diaponeurosporene oxygenase.